A 548-amino-acid polypeptide reads, in one-letter code: Natural resistance-associated macrophage protein 1 (548 aa).

Residues 1 to 11 show a composition bias toward polar residues; the sequence is MSGDTGPSKQG. Positions 1 to 38 are disordered; that stretch reads MSGDTGPSKQGGTRYGSISSPPSPGPQQAPPGGTYLGE. Residues 1–55 are Cytoplasmic-facing; that stretch reads MSGDTGPSKQGGTRYGSISSPPSPGPQQAPPGGTYLGEKIPIPDTESGAFSLRKL. A helical membrane pass occupies residues 56-73; that stretch reads WAFTGPGFLMSIAFLDPG. Topologically, residues 74–82 are extracellular; that stretch reads NIESDLQAG. Residues 83–102 traverse the membrane as a helical segment; sequence AVAGFKLLWVLLWATVLGLL. Residues 103–139 are Cytoplasmic-facing; it reads CQRLAARLGVVTGKDLGEVCHLYYPKVPRILLWLTIE. Residues 140–160 form a helical membrane-spanning segment; the sequence is LAIVGSDMQEVIGTAIAFSLL. Over 161 to 164 the chain is Extracellular; that stretch reads SAGR. Residues 165 to 184 form a helical membrane-spanning segment; sequence IPLWGGVLITVVDTFFFLFL. At 185-193 the chain is on the cytoplasmic side; it reads DNYGLRKLE. Residues 194-214 form a helical membrane-spanning segment; sequence AFFGFLITIMALTFGYEYVVA. Residues 215–237 lie on the Extracellular side of the membrane; that stretch reads QPAQGALLQGLFLPSCRGCGQPE. Residues 238–256 traverse the membrane as a helical segment; sequence LLQAVGIIGAIIMPHNIYL. Residues 257–284 lie on the Cytoplasmic side of the membrane; it reads HSSLVKSREVDRSRRADIREANMYFLIE. A helical membrane pass occupies residues 285–304; that stretch reads ATIALSVSFLINLFVMAVFG. The Extracellular segment spans residues 305–346; that stretch reads QAFYKQTNQAAFNICAKSSLHDYAPIFPRNNLTVAVDIYQGG. Asn335 carries an N-linked (GlcNAc...) asparagine glycan. The helical transmembrane segment at 347–366 threads the bilayer; sequence VILGCLFGPAALYIWAVGLL. Over 367–397 the chain is Cytoplasmic; it reads AAGQSSTMTGTYAGQFVMEGFLKLRWSRFAR. A helical transmembrane segment spans residues 398-415; sequence VLLTRSCAILPTVLLAVF. Topologically, residues 416-426 are extracellular; it reads RDLRDLSGLND. Residues 427–447 form a helical membrane-spanning segment; sequence LLNVLQSLLLPFAVLPILTFT. Over 448–463 the chain is Cytoplasmic; that stretch reads SMPALMQEFANGLVSK. A helical membrane pass occupies residues 464-485; that stretch reads VITSSIMVLVCAVNLYFVISYV. At 486–493 the chain is on the extracellular side; that stretch reads PSLPHPAY. Residues 494-513 form a helical membrane-spanning segment; it reads FSLVALLAAAYLGLTTYLVW. The Cytoplasmic segment spans residues 514–548; sequence TCLITQGATFLAHNSHQRFLYGLPEEDQEKGRTSG.

Belongs to the NRAMP family.

The protein localises to the late endosome membrane. It localises to the lysosome membrane. It catalyses the reaction Zn(2+)(in) + H(+)(out) = Zn(2+)(out) + H(+)(in). The catalysed reaction is Fe(2+)(in) + H(+)(out) = Fe(2+)(out) + H(+)(in). It carries out the reaction Mn(2+)(in) + H(+)(out) = Mn(2+)(out) + H(+)(in). In terms of biological role, macrophage-specific antiporter that fluxes metal ions in either direction against a proton gradient. Localized to late endosomal lysosomal membranes, delivers bivalent cations from the cytosol into these acidic compartments where they may directly affect antimicrobial activity. Involved in iron metabolism and host natural resistance to infection with intracellular parasites. Pathogen resistance involves sequestration of Fe(2+) and Mn(2+), cofactors of both prokaryotic and eukaryotic catalases and superoxide dismutases, not only to protect the macrophage against its own generation of reactive oxygen species, but to deny the cations to the pathogen for synthesis of its protective enzymes. This chain is Natural resistance-associated macrophage protein 1 (SLC11A1), found in Bubalus bubalis (Domestic water buffalo).